Consider the following 202-residue polypeptide: NADH-quinone oxidoreductase subunit C (202 aa).

The protein belongs to the complex I 30 kDa subunit family. NDH-1 is composed of 14 different subunits. Subunits NuoB, C, D, E, F, and G constitute the peripheral sector of the complex.

The protein resides in the cell inner membrane. It catalyses the reaction a quinone + NADH + 5 H(+)(in) = a quinol + NAD(+) + 4 H(+)(out). NDH-1 shuttles electrons from NADH, via FMN and iron-sulfur (Fe-S) centers, to quinones in the respiratory chain. The immediate electron acceptor for the enzyme in this species is believed to be ubiquinone. Couples the redox reaction to proton translocation (for every two electrons transferred, four hydrogen ions are translocated across the cytoplasmic membrane), and thus conserves the redox energy in a proton gradient. The chain is NADH-quinone oxidoreductase subunit C from Acidithiobacillus ferrooxidans (strain ATCC 23270 / DSM 14882 / CIP 104768 / NCIMB 8455) (Ferrobacillus ferrooxidans (strain ATCC 23270)).